Reading from the N-terminus, the 606-residue chain is DNA mismatch repair protein MutL (606 aa).

The disordered stretch occupies residues 340 to 366; it reads MNAFRPGYSPSGLRPSPSATWSAATSP. The segment covering 353–366 has biased composition (low complexity); that stretch reads RPSPSATWSAATSP.

The protein belongs to the DNA mismatch repair MutL/HexB family.

Functionally, this protein is involved in the repair of mismatches in DNA. It is required for dam-dependent methyl-directed DNA mismatch repair. May act as a 'molecular matchmaker', a protein that promotes the formation of a stable complex between two or more DNA-binding proteins in an ATP-dependent manner without itself being part of a final effector complex. In Agrobacterium fabrum (strain C58 / ATCC 33970) (Agrobacterium tumefaciens (strain C58)), this protein is DNA mismatch repair protein MutL.